The primary structure comprises 408 residues: Photox toxin (408 aa).

Residues 168 to 196 (NNQQHIKDSDGRKPVNNMPPPPPPPMADK) form a disordered region. Residues 184-193 (NMPPPPPPPM) show a composition bias toward pro residues. The 204-residue stretch at 190 to 393 (PPPMADKTQK…LRLTDDASAD (204 aa)) folds into the TR mART core domain. Active-site residues include R288, S318, and E355.

In the C-terminal section; belongs to the SpvB family.

The enzyme catalyses L-arginyl-[protein] + NAD(+) = N(omega)-(ADP-D-ribosyl)-L-arginyl-[protein] + nicotinamide + H(+). Its function is as follows. Mono-ADP-ribosylates chicken skeletal alpha-actin and human non-skeletal beta- and gamma-actin. Mono-ADP-ribosylates 'Arg-177' of yeast actin, blocking its ability to polymerize. Does not possess NAD(+)-glycohydrolase activity, unlike most mART enzymes. Upon expression in S.cerevisiae almost completely inhibits growth. This is Photox toxin (phxA) from Photorhabdus laumondii subsp. laumondii (strain DSM 15139 / CIP 105565 / TT01) (Photorhabdus luminescens subsp. laumondii).